Consider the following 353-residue polypeptide: uncharacterized protein (353 aa).

The tract at residues 69 to 106 (ISSATPSSTPPATRASSRLQPPKGHQAGGSNSQQQQPS) is disordered. Low complexity predominate over residues 70 to 86 (SSATPSSTPPATRASSR). Positions 319–353 (GENKEKKMREMSRVYREMTRQMDDTRRDLDRLNQG) form a coiled coil.

This is an uncharacterized protein from Gibberella zeae (strain ATCC MYA-4620 / CBS 123657 / FGSC 9075 / NRRL 31084 / PH-1) (Wheat head blight fungus).